Here is a 119-residue protein sequence, read N- to C-terminus: Beta-2-microglobulin (119 aa).

An N-terminal signal peptide occupies residues 1-20; that stretch reads MARFVVVPLLVLLSLFGLEA. The 90-residue stretch at 25–114 folds into the Ig-like C1-type domain; it reads PKIQVYSRYP…VTFSTPKTVK (90 aa). Cys45 and Cys100 are disulfide-bonded.

It belongs to the beta-2-microglobulin family. Heterodimer of an alpha chain and a beta chain. Beta-2-microglobulin is the beta-chain of major histocompatibility complex class I molecules.

The protein resides in the secreted. Its function is as follows. Component of the class I major histocompatibility complex (MHC). Involved in the presentation of peptide antigens to the immune system. In Saguinus bicolor bicolor (Pied bare-faced tamarin), this protein is Beta-2-microglobulin (B2M).